Here is a 169-residue protein sequence, read N- to C-terminus: UPF0303 protein BOV_1367 (169 aa).

It belongs to the UPF0303 family.

The protein is UPF0303 protein BOV_1367 of Brucella ovis (strain ATCC 25840 / 63/290 / NCTC 10512).